A 444-amino-acid polypeptide reads, in one-letter code: Alpha-(1,3)-fucosyltransferase B (444 aa).

Topologically, residues 1 to 6 (MRLAQR) are cytoplasmic. The helical; Signal-anchor for type II membrane protein transmembrane segment at 7 to 27 (YGIALVALLMVGATVLFFWSE) threads the bilayer. The Lumenal segment spans residues 28-444 (NIINYENIKF…GNNCSNSSNT (417 aa)). N-linked (GlcNAc...) asparagine glycosylation is found at asparagine 279, asparagine 437, and asparagine 440.

It belongs to the glycosyltransferase 10 family.

It is found in the golgi apparatus. The protein resides in the golgi stack membrane. It participates in protein modification; protein glycosylation. This Drosophila melanogaster (Fruit fly) protein is Alpha-(1,3)-fucosyltransferase B (FucTB).